We begin with the raw amino-acid sequence, 618 residues long: Mitochondrial Rho GTPase 2 (618 aa).

Topologically, residues 1 to 591 (MKRDVRILLL…LNAVELGAAS (591 aa)) are cytoplasmic. Positions 2–168 (KRDVRILLLG…FYYAQKAVLH (167 aa)) constitute a Miro 1 domain. Positions 16, 17, 18, and 19 each coordinate GTP. Threonine 18 is a binding site for Mg(2+). 2 residues coordinate Mg(2+): proline 35 and aspartate 57. 6 residues coordinate GTP: serine 59, asparagine 118, lysine 119, aspartate 121, alanine 149, and lysine 150. EF-hand domains follow at residues 184–219 (ACSR…CFGN) and 304–339 (LGYQ…FPCM). Residues aspartate 197, aspartate 199, asparagine 201, glutamate 208, aspartate 317, aspartate 319, aspartate 321, and glutamate 328 each contribute to the Ca(2+) site. In terms of domain architecture, Miro 2 spans 416-579 (RNVFLCKVLG…YTKLATAATF (164 aa)). Residues glycine 428, glycine 430, lysine 431, serine 432, and alanine 433 each contribute to the GTP site. A Mg(2+)-binding site is contributed by serine 432. Mg(2+) is bound at residue glutamate 474. GTP-binding residues include lysine 528, aspartate 530, and cysteine 559. The chain crosses the membrane as a helical; Anchor for type IV membrane protein span at residues 592–614 (FWLRVALGAAVTALVGFTLYRVL). The Mitochondrial intermembrane portion of the chain corresponds to 615–618 (AKNK).

It belongs to the mitochondrial Rho GTPase family. As to quaternary structure, homodimer.

It localises to the mitochondrion outer membrane. It carries out the reaction GTP + H2O = GDP + phosphate + H(+). The enzyme catalyses ATP + H2O = ADP + phosphate + H(+). The catalysed reaction is UTP + H2O = UDP + phosphate + H(+). In terms of biological role, atypical mitochondrial nucleoside-triphosphatase (NTPase) involved in mitochondrial trafficking. Probably involved in control of anterograde transport of mitochondria and their subcellular distribution. Can hydrolyze GTP, ATP and UTP. The protein is Mitochondrial Rho GTPase 2 (RHOT2) of Gallus gallus (Chicken).